The sequence spans 391 residues: Cilia- and flagella-associated protein 263 (391 aa).

The tract at residues 1–21 (MTDDDSETSASETQAQEESDL) is disordered. 2 coiled-coil regions span residues 95–243 (LSVD…NQEL) and 294–369 (LRKE…LKGY).

Belongs to the CFAP263 family. Forms a complex with CFAP184; the interaction is required for functional activity in cilia. Interacts with HAP1 and PCM1.

The protein localises to the cytoplasm. Its subcellular location is the cytoskeleton. It localises to the microtubule organizing center. It is found in the centrosome. The protein resides in the centriolar satellite. The protein localises to the cell projection. Its subcellular location is the cilium. Component of centriolar satellites contributing to primary cilium formation. In complex with CFAP263, acts as a regulator of ciliary beating that connects radial spoke 3 (RS3) to the inner dynein arm (IDA) and the nexin-dynein regulatory complex (N-DRC). The complex is positioned parallel to N-DRC and forms a connection between the arch at the base of RS3, the IDA tail and N-DRC. The sequence is that of Cilia- and flagella-associated protein 263 (CFAP263) from Bos taurus (Bovine).